Consider the following 515-residue polypeptide: Thioredoxin domain-containing protein 2 (515 aa).

The segment at 1 to 23 (MTLNNGGKANERGSNENPLQALS) is disordered. Phosphoserine is present on residues S14 and S39. Positions 51 to 390 (TLHMSTEESE…NTIKSSEEDV (340 aa)) are disordered. Polar residues-rich tracts occupy residues 61–75 (FPQQ…SENT) and 85–136 (KPSS…TNST). 21 tandem repeats follow at residues 92–106 (QLKQ…GYSK), 107–121 (QTNY…AKTT), 122–136 (HPKQ…TNST), 137–151 (HYRE…EDII), 152–166 (QPKK…EDII), 167–181 (QSKK…EDII), 182–196 (QSKK…EDII), 197–211 (QSKK…EDII), 212–226 (QSKK…EDII), 227–241 (QPKK…EDSV), 242–256 (PSKK…EDSV), 257–271 (QPKK…EDSV), 272–286 (QSKE…KDSI), 287–301 (QSKE…QDSI), 302–316 (QSKE…KDSV), 317–331 (QSKE…HESI), 332–346 (QSKE…KDSI), 347–362 (PSKE…DTIQ), 363–375 (SQEE…EDTI), 376–390 (QSQE…EEDV), and 391–405 (QLSE…AEIE). The interval 92-405 (QLKQENISKS…KLLGLGAEIE (314 aa)) is 21 X 15 AA approximate tandem repeat of Q-P-K-X-G-D-I-P-K-S-[PS]-E-[KE]-X-I. Basic and acidic residues-rich tracts occupy residues 137 to 293 (HYRE…ETKV) and 302 to 358 (QSKE…KSPE). S146 is subject to Phosphoserine. The span at 375–384 (IQSQEGNTIK) shows a compositional bias: polar residues. The region spanning 398–515 (LGLGAEIETL…KLERSISELK (118 aa)) is the Thioredoxin domain. Cysteines 442 and 445 form a disulfide.

Testis-specific. Strongly expressed in the testicular seminiferous tubules, mostly in the round spermatids.

It is found in the cytoplasm. In terms of biological role, probably plays a regulatory role in sperm development. May participate in regulation of fibrous sheath (FS) assembly by supporting the formation of disulfide bonds during sperm tail morphogenesis. May also be required to rectify incorrect disulfide pairing and generate suitable pairs between the FS constituents. Can reduce disulfide bonds in vitro in the presence of NADP and thioredoxin reductase. The protein is Thioredoxin domain-containing protein 2 (Txndc2) of Mus musculus (Mouse).